The following is a 411-amino-acid chain: NAD-dependent dihydropyrimidine dehydrogenase subunit PreA (411 aa).

Substrate is bound by residues asparagine 76 and 134-136; that span reads NFS. Cysteine 137 functions as the Nucleophile in the catalytic mechanism. 201 to 202 contributes to the substrate binding site; sequence NT. 2 4Fe-4S ferredoxin-type domains span residues 335–367 and 369–398; these read VYPR…WSEK and RTPH…LGEV. [4Fe-4S] cluster contacts are provided by cysteine 344, cysteine 347, cysteine 350, cysteine 354, cysteine 378, cysteine 381, cysteine 384, and cysteine 388.

The protein belongs to the dihydropyrimidine dehydrogenase family. Heterotetramer of 2 PreA and 2 PreT subunits. [4Fe-4S] cluster is required as a cofactor.

It catalyses the reaction 5,6-dihydrouracil + NAD(+) = uracil + NADH + H(+). It carries out the reaction 5,6-dihydrothymine + NAD(+) = thymine + NADH + H(+). Involved in pyrimidine base degradation. Catalyzes physiologically the reduction of uracil to 5,6-dihydrouracil (DHU) by using NADH as a specific cosubstrate. It also catalyzes the reverse reaction and the reduction of thymine to 5,6-dihydrothymine (DHT). The sequence is that of NAD-dependent dihydropyrimidine dehydrogenase subunit PreA (preA) from Escherichia coli O157:H7.